A 564-amino-acid chain; its full sequence is Multidrug resistance protein 1 (564 aa).

Residues 1–115 lie on the Cytoplasmic side of the membrane; that stretch reads MHYRFLRDSF…NPQNWPTLQK (115 aa). The segment at 60 to 101 is disordered; sequence IDNQGEPNSSQSSSSNNTIVDNNNNNDNDVDGDKIVVTWDGD. The span at 67–86 shows a compositional bias: low complexity; the sequence is NSSQSSSSNNTIVDNNNNND. A helical transmembrane segment spans residues 116–136; the sequence is AFFIFQISFLTTSVYMGSAVY. The Extracellular portion of the chain corresponds to 137–151; that stretch reads TPGIEELMHDFGIGR. The helical transmembrane segment at 152 to 172 threads the bilayer; it reads VVATLPLTLFVIGYGVGPLVF. Residues 173–183 are Cytoplasmic-facing; sequence SPMSENAIFGR. Residues 184–204 form a helical membrane-spanning segment; the sequence is TSIYIITLFLFVILQIPTALV. At 205 to 206 the chain is on the extracellular side; that stretch reads NN. A helical membrane pass occupies residues 207–227; it reads IAGLCILRFLGGFFASPCLAT. Residues 228 to 242 are Cytoplasmic-facing; the sequence is GGASVADVVKFWNLP. The chain crosses the membrane as a helical span at residues 243–263; that stretch reads VGLAAWSLGAVCGPSFGPFFG. Topologically, residues 264–273 are extracellular; it reads SILTVKASWR. The chain crosses the membrane as a helical span at residues 274 to 294; that stretch reads WTFWFMCIISGFSFVMLCFTL. The Cytoplasmic segment spans residues 295-350; that stretch reads PETFGKTLLYRKAKRLRAITGNDRITSEGEVENSKMTSHELIIDTLWRPLEITVME. The helical transmembrane segment at 351–371 threads the bilayer; sequence PVVLLINIYIAMVYSILYLFF. At 372–390 the chain is on the extracellular side; sequence EVFPIYFVGVKHFTLVELG. A helical membrane pass occupies residues 391–411; that stretch reads TTYMSIVIGIVIAAFIYIPVI. Residues 412 to 428 are Cytoplasmic-facing; the sequence is RQKFTKPILRQEQVFPE. The helical transmembrane segment at 429–449 threads the bilayer; it reads VFIPIAIVGGILLTSGLFIFG. Residues 450–455 lie on the Extracellular side of the membrane; the sequence is WSANRT. A glycan (N-linked (GlcNAc...) asparagine) is linked at Asn453. The helical transmembrane segment at 456–476 threads the bilayer; the sequence is THWVGPLFGAATTASGAFLIF. The Cytoplasmic segment spans residues 477–503; sequence QTLFNFMGASFKPHYIASVFASNDLFR. A helical membrane pass occupies residues 504 to 524; it reads SVIASVFPLFGAPLFDNLATP. Topologically, residues 525–528 are extracellular; it reads EYPV. Residues 529 to 549 form a helical membrane-spanning segment; the sequence is AWGSSVLGFITLVMIAIPVLF. The Cytoplasmic portion of the chain corresponds to 550–564; sequence YLNGPKLRARSKYAN.

The protein belongs to the major facilitator superfamily. CAR1 family.

It localises to the cell membrane. Its function is as follows. Plasma membrane multidrug efflux pump that confers resistance to numerous chemicals including azoles such as fluconazole, voriconazole, and benztriazoles, as well as to benomyl, cycloheximide, methotrexate, 4-nitroquinoline-N-oxide, sulfometuron methyl, cerulenin, and brefeldin A. This Candida albicans (strain SC5314 / ATCC MYA-2876) (Yeast) protein is Multidrug resistance protein 1.